A 315-amino-acid polypeptide reads, in one-letter code: Tetraacyldisaccharide 4'-kinase (315 aa).

45-52 (SVGGSGKT) is a binding site for ATP.

Belongs to the LpxK family.

The enzyme catalyses a lipid A disaccharide + ATP = a lipid IVA + ADP + H(+). It functions in the pathway glycolipid biosynthesis; lipid IV(A) biosynthesis; lipid IV(A) from (3R)-3-hydroxytetradecanoyl-[acyl-carrier-protein] and UDP-N-acetyl-alpha-D-glucosamine: step 6/6. Transfers the gamma-phosphate of ATP to the 4'-position of a tetraacyldisaccharide 1-phosphate intermediate (termed DS-1-P) to form tetraacyldisaccharide 1,4'-bis-phosphate (lipid IVA). This is Tetraacyldisaccharide 4'-kinase from Aquifex aeolicus (strain VF5).